The sequence spans 502 residues: MEFSVKSGSPEKQRSACIVVGVFEPRRLSPIAEQLDKISDGYISSLLRRGDLEGKPGQMLLLHHVPNVLSERVLLVGCGKERELDERQYKQIIKKTISTLNETGSMEAVCFLTELHVKGRDTYWKVRQAVETTKDSLYTFNQFKSNKPETRRPLRKLVFNVPTRRELSLGERAITHGLAVASGVKASKDLGNMPPNVANPAYLASQARRLADDFDTVTTKIIGEQEMKELGMTSYLAVGQGSKNEAMMSVIEYKGSADPDAKPIVLIGKGLTFDSGGISIKPSAQMDEMKYDMCGAASVFGAMKSLAQLNLPINVVGVIAGCENMPGGNAYRPGDIITTMSGKTVEVLNTDAEGRLVLCDALTYVERFDPDCVVDVATLTGACVVALGHHISGLLGNHNPLAHELINASEQSGDRAWRLPMSDEYQDQISSPFADMANLGSPGAGTITAGCFLSRFTKKYNWAHLDIAGTAWVGGKEKGSTGRPVPLLVQFLLNRAGLENVE.

Mn(2+) is bound by residues K269 and D274. K281 is a catalytic residue. 3 residues coordinate Mn(2+): D292, D351, and E353. Residue R355 is part of the active site.

It belongs to the peptidase M17 family. Mn(2+) serves as cofactor.

It localises to the cytoplasm. The enzyme catalyses Release of an N-terminal amino acid, Xaa-|-Yaa-, in which Xaa is preferably Leu, but may be other amino acids including Pro although not Arg or Lys, and Yaa may be Pro. Amino acid amides and methyl esters are also readily hydrolyzed, but rates on arylamides are exceedingly low.. It carries out the reaction Release of an N-terminal amino acid, preferentially leucine, but not glutamic or aspartic acids.. Presumably involved in the processing and regular turnover of intracellular proteins. Catalyzes the removal of unsubstituted N-terminal amino acids from various peptides. In Photobacterium profundum (strain SS9), this protein is Probable cytosol aminopeptidase.